We begin with the raw amino-acid sequence, 236 residues long: Opacity protein opA50 (236 aa).

Residue A1 is a signal peptide.

Belongs to the opacity porin family.

It is found in the cell outer membrane. In terms of biological role, implicated in a number of adherence functions. OPA proteins are implicated in pathogenesis and are subject to phase variation. In Neisseria gonorrhoeae, this protein is Opacity protein opA50 (opaC).